Consider the following 580-residue polypeptide: Pentatricopeptide repeat-containing protein At5g10690 (580 aa).

PPR repeat units follow at residues 76-110 (NTIV…GGIG), 112-142 (DSIS…IEYG), 151-181 (SSSL…YDIL), 189-223 (SVLI…RLEP), 224-254 (DRLT…MKEK), 266-296 (DVVT…MKLC), 302-337 (DRTA…GANE), 342-376 (KPHL…SSGS), and 382-417 (QQEA…KTIP). The CBS domain occupies 486-553 (VPIVDDRGSC…IVVHCGNFSG (68 aa)).

Belongs to the PPR family. P subfamily.

The protein is Pentatricopeptide repeat-containing protein At5g10690 (CBSPPR1) of Arabidopsis thaliana (Mouse-ear cress).